The sequence spans 295 residues: 2-methylisocitrate lyase (295 aa).

Position 45-47 (45-47 (SGG)) interacts with substrate. Mg(2+) contacts are provided by Asp85 and Asp87. Substrate contacts are provided by residues 123 to 124 (CG), Arg158, Glu188, 210 to 212 (NIT), Arg241, and Arg270.

It belongs to the isocitrate lyase/PEP mutase superfamily. Methylisocitrate lyase family. As to quaternary structure, homotetramer; dimer of dimers. It depends on Mg(2+) as a cofactor.

It carries out the reaction (2S,3R)-3-hydroxybutane-1,2,3-tricarboxylate = pyruvate + succinate. The protein operates within organic acid metabolism; propanoate degradation. In terms of biological role, involved in the catabolism of short chain fatty acids (SCFA) via the 2-methylcitrate cycle I (propionate degradation route). Catalyzes the thermodynamically favored C-C bond cleavage of (2R,3S)-2-methylisocitrate to yield pyruvate and succinate via an alpha-carboxy-carbanion intermediate. This chain is 2-methylisocitrate lyase, found in Salmonella typhimurium (strain LT2 / SGSC1412 / ATCC 700720).